We begin with the raw amino-acid sequence, 780 residues long: ATP-dependent DNA helicase RecG (780 aa).

Domain regions lie at residues 1–350 (MLCS…GGIP), 351–549 (KKIE…EMPP), and 550–780 (GRKE…IEVG). The wedge domain stretch occupies residues 154–252 (RKIFKLNDLL…VTPKEGEYVR (99 aa)). Positions 367, 369, 399, 400, 401, 402, 403, and 436 each coordinate ATP. The region spanning 383 to 544 (DMISEKPMNR…FYGDLDVTVI (162 aa)) is the Helicase ATP-binding domain. A DEAH box motif is present at residues 497–500 (DEQH). One can recognise a Helicase C-terminal domain in the interval 563 to 728 (RVNEVYEFVR…EYDLKTRGPG (166 aa)).

This sequence belongs to the helicase family. RecG subfamily. As to quaternary structure, monomer.

It catalyses the reaction Couples ATP hydrolysis with the unwinding of duplex DNA by translocating in the 3'-5' direction.. The catalysed reaction is ATP + H2O = ADP + phosphate + H(+). Plays a critical role in recombination and DNA repair. Helps process Holliday junction intermediates to mature products by catalyzing branch migration. Has replication fork (Y-DNA) regression activity, unwinds stalled or blocked replication forks to make a HJ that can be resolved. Has a DNA unwinding activity characteristic of a DNA helicase with 3'-5' polarity. Might be a DNA translocase rather than a bona fide helicase. The sequence is that of ATP-dependent DNA helicase RecG from Thermotoga maritima (strain ATCC 43589 / DSM 3109 / JCM 10099 / NBRC 100826 / MSB8).